Here is a 380-residue protein sequence, read N- to C-terminus: Cytochrome b (380 aa).

A run of 4 helical transmembrane segments spans residues F34 to M54, W78 to I99, W114 to L134, and F179 to T199. Positions 84 and 98 each coordinate heme b. Positions 183 and 197 each coordinate heme b. H202 is a binding site for a ubiquinone. The next 4 membrane-spanning stretches (helical) occupy residues F227–S247, L289–H309, L321–S341, and F348–P368.

Belongs to the cytochrome b family. In terms of assembly, the cytochrome bc1 complex contains 11 subunits: 3 respiratory subunits (MT-CYB, CYC1 and UQCRFS1), 2 core proteins (UQCRC1 and UQCRC2) and 6 low-molecular weight proteins (UQCRH/QCR6, UQCRB/QCR7, UQCRQ/QCR8, UQCR10/QCR9, UQCR11/QCR10 and a cleavage product of UQCRFS1). This cytochrome bc1 complex then forms a dimer. Heme b is required as a cofactor.

The protein resides in the mitochondrion inner membrane. Component of the ubiquinol-cytochrome c reductase complex (complex III or cytochrome b-c1 complex) that is part of the mitochondrial respiratory chain. The b-c1 complex mediates electron transfer from ubiquinol to cytochrome c. Contributes to the generation of a proton gradient across the mitochondrial membrane that is then used for ATP synthesis. The protein is Cytochrome b (MT-CYB) of Gallus gallus (Chicken).